A 367-amino-acid chain; its full sequence is Probable 7-methylxanthine methyltransferase 2 (367 aa).

Y20 contributes to the S-adenosyl-L-homocysteine binding site. T27 serves as a coordination point for theobromine. Positions 64, 69, 101, 102, 134, and 135 each coordinate S-adenosyl-L-homocysteine. Y152, H155, and W156 together coordinate theobromine. 4 residues coordinate Mg(2+): N172, D258, F260, and N261. F313 serves as a coordination point for theobromine.

This sequence belongs to the methyltransferase superfamily. Type-7 methyltransferase family. Mg(2+) serves as cofactor.

It catalyses the reaction 7-methylxanthine + S-adenosyl-L-methionine = theobromine + S-adenosyl-L-homocysteine + H(+). The protein operates within alkaloid biosynthesis. Functionally, involved in the biosynthesis of theobromine. This is Probable 7-methylxanthine methyltransferase 2 from Theobroma cacao (Cacao).